Here is a 420-residue protein sequence, read N- to C-terminus: Acetyl-CoA acetyltransferase, mitochondrial (420 aa).

Residues 1 to 33 (MAFCGPRTAARLSHSTRALHYTHRGHVSQRTLN) constitute a mitochondrion transit peptide. The active-site Acyl-thioester intermediate is Cys-119. CoA-binding positions include Tyr-212, 251–253 (RVD), and Lys-256. Tyr-212 serves as a coordination point for K(+). K(+) contacts are provided by Ala-273, Ala-274, and Ala-276. Position 277 (Ser-277) interacts with CoA. Val-374 serves as a coordination point for K(+). The Proton donor/acceptor role is filled by Cys-406.

Belongs to the thiolase-like superfamily. Thiolase family. Homotetramer.

Its subcellular location is the mitochondrion. It carries out the reaction 2 acetyl-CoA = acetoacetyl-CoA + CoA. The catalysed reaction is propanoyl-CoA + acetyl-CoA = 2-methyl-3-oxobutanoyl-CoA + CoA. Its pathway is lipid metabolism; fatty acid beta-oxidation. Functionally, this is one of the enzymes that catalyzes the last step of the mitochondrial beta-oxidation pathway, an aerobic process breaking down fatty acids into acetyl-CoA. Using free coenzyme A/CoA, catalyzes the thiolytic cleavage of medium- to long-chain 3-oxoacyl-CoAs into acetyl-CoA and a fatty acyl-CoA shortened by two carbon atoms. The activity of the enzyme is reversible and it can also catalyze the condensation of two acetyl-CoA molecules into acetoacetyl-CoA. Thereby, it plays a major role in ketone body metabolism. This Xenopus tropicalis (Western clawed frog) protein is Acetyl-CoA acetyltransferase, mitochondrial (acat1).